Consider the following 212-residue polypeptide: Nodulation protein NolU (212 aa).

Its function is as follows. Regulates cultivar-specific nodulation of soybean. This chain is Nodulation protein NolU (nolU), found in Rhizobium fredii (Sinorhizobium fredii).